The primary structure comprises 165 residues: Small histone ubiquitination factor 1 (165 aa).

The span at 1–17 (MSSRRNDYHYDGNDHQY) shows a compositional bias: basic and acidic residues. The tract at residues 1–86 (MSSRRNDYHY…STRASFGAAS (86 aa)) is disordered. 2 stretches are compositionally biased toward low complexity: residues 29–38 (SFYESSYRSR) and 50–60 (SSYDSPSSSTN). The span at 73–86 (PSNNSTRASFGAAS) shows a compositional bias: polar residues.

In terms of assembly, component of the histone H2B ubiquitin ligase complex (HULC) composed of at least brl1, brl2, rhp6 and shf1.

It is found in the nucleus. The protein localises to the cytoplasm. It localises to the cytoskeleton. The protein resides in the microtubule organizing center. Its subcellular location is the spindle pole body. Component of the histone H2B ubiquitin ligase complex (HULC) which plays a role in transcription regulation by catalyzing the monoubiquitination of histone H2B to form H2BK123ub1. H2BK123ub1 gives a specific tag for epigenetic transcriptional activation and is also a prerequisite for H3K4me and H3K79me formation. This Schizosaccharomyces pombe (strain 972 / ATCC 24843) (Fission yeast) protein is Small histone ubiquitination factor 1 (shf1).